The primary structure comprises 62 residues: Photosystem II reaction center protein Z (62 aa).

The next 2 membrane-spanning stretches (helical) occupy residues 8–28 (AIFA…VVFA) and 41–61 (FSGT…NSLI).

Belongs to the PsbZ family. In terms of assembly, PSII is composed of 1 copy each of membrane proteins PsbA, PsbB, PsbC, PsbD, PsbE, PsbF, PsbH, PsbI, PsbJ, PsbK, PsbL, PsbM, PsbT, PsbY, PsbZ, Psb30/Ycf12, at least 3 peripheral proteins of the oxygen-evolving complex and a large number of cofactors. It forms dimeric complexes.

The protein resides in the plastid. It localises to the chloroplast thylakoid membrane. Functionally, may control the interaction of photosystem II (PSII) cores with the light-harvesting antenna, regulates electron flow through the 2 photosystem reaction centers. PSII is a light-driven water plastoquinone oxidoreductase, using light energy to abstract electrons from H(2)O, generating a proton gradient subsequently used for ATP formation. The sequence is that of Photosystem II reaction center protein Z from Acorus gramineus (Dwarf sweet flag).